The chain runs to 321 residues: Olfactory receptor 3A2 (321 aa).

At 1–35 (MSLQKLMEPEAGTNRTAVAEFILLGLVQTEEMQPV) the chain is on the extracellular side. Asn-14 is a glycosylation site (N-linked (GlcNAc...) asparagine). Residues 36-58 (VFVLLLFAYLVTTGGNLSILAAV) traverse the membrane as a helical segment. The Cytoplasmic segment spans residues 59–66 (LVEPKLHA). The helical transmembrane segment at 67–88 (PMYFFLGNLSVLDVGCITVTVP) threads the bilayer. Topologically, residues 89–109 (AMLGRLLSHKSTISYDACLSQ) are extracellular. Residues Cys-106 and Cys-198 are joined by a disulfide bond. A helical membrane pass occupies residues 110–129 (LFFFHLLAGMDCFLLTAMAY). At 130–149 (DRLLAICQPLTYSTRMSQTV) the chain is on the cytoplasmic side. The chain crosses the membrane as a helical span at residues 150–167 (QRMLVAASLACAFTNALT). The Extracellular segment spans residues 168–205 (HTVAMSTLNFCGPNEVNHFYCDLPQLFQLSCSSTQLNE). The helical transmembrane segment at 206 to 229 (LLLFAVGFIMAGTPLVLIITAYSH) threads the bilayer. At 230 to 246 (VAAAVLRIRSVEGRKKA) the chain is on the cytoplasmic side. Residues 247–270 (FSTCGSHLTVVCLFFGRGIFNYMR) form a helical membrane-spanning segment. Residues 271 to 281 (LGSEEASDKDK) are Extracellular-facing. The helical transmembrane segment at 282–301 (GVGVFNTVINPMLNPLIYSL) threads the bilayer. The Cytoplasmic portion of the chain corresponds to 302-321 (RNPDVQGALWQIFLGRRSLT).

Belongs to the G-protein coupled receptor 1 family.

It is found in the cell membrane. Odorant receptor. The polypeptide is Olfactory receptor 3A2 (OR3A2) (Homo sapiens (Human)).